Consider the following 280-residue polypeptide: 23S rRNA (guanine(748)-N(1))-methyltransferase (280 aa).

Zn(2+) is bound by residues cysteine 11, cysteine 14, cysteine 27, and histidine 31. Residues tyrosine 70, 100-101 (TG), and histidine 188 contribute to the S-adenosyl-L-methionine site.

This sequence belongs to the methyltransferase superfamily. RlmA family.

The catalysed reaction is guanosine(748) in 23S rRNA + S-adenosyl-L-methionine = N(1)-methylguanosine(748) in 23S rRNA + S-adenosyl-L-homocysteine + H(+). Functionally, specifically methylates the guanosine in position 748 of 23S rRNA. Confers resistance to the macrolide antibiotic tylosine. The protein is 23S rRNA (guanine(748)-N(1))-methyltransferase (rlmAII) of Streptomyces fradiae (Streptomyces roseoflavus).